We begin with the raw amino-acid sequence, 190 residues long: Potassium-transporting ATPase KdpC subunit (190 aa).

A helical transmembrane segment spans residues 11–31 (LIVLMSLITGVAYPLVVTGVA).

It belongs to the KdpC family. As to quaternary structure, the system is composed of three essential subunits: KdpA, KdpB and KdpC.

It is found in the cell inner membrane. Part of the high-affinity ATP-driven potassium transport (or Kdp) system, which catalyzes the hydrolysis of ATP coupled with the electrogenic transport of potassium into the cytoplasm. This subunit acts as a catalytic chaperone that increases the ATP-binding affinity of the ATP-hydrolyzing subunit KdpB by the formation of a transient KdpB/KdpC/ATP ternary complex. In Pseudomonas syringae pv. tomato (strain ATCC BAA-871 / DC3000), this protein is Potassium-transporting ATPase KdpC subunit.